We begin with the raw amino-acid sequence, 365 residues long: Aminotransferase poxL (365 aa).

Arg92 is a binding site for pyridoxal 5'-phosphate. Lys193 is modified (N6-(pyridoxal phosphate)lysine). Pyridoxal 5'-phosphate is bound at residue Glu229.

The protein belongs to the class-IV pyridoxal-phosphate-dependent aminotransferase family. Requires pyridoxal 5'-phosphate as cofactor.

The protein operates within secondary metabolite biosynthesis. Aminotransferase; part of the gene cluster that mediates the biosynthesis of oxaleimides, cytotoxic compounds containing an unusual disubstituted succinimide moiety. The first step of the pathway is provided by the HR-PKS poxF that serves in a new mode of collaborative biosynthesis with the PKS-NRPS poxE, by providing the olefin containing amino acid substrate via the synthesis of an ACP-bound dec-4-enoate. The cytochrome P450 monooxygenase poxM-catalyzed oxidation at the alpha-position creates the enzyme-bound 2-hydroxydec-4-enoyl-ACP thioester, which may be prone to spontaneous hydrolysis to yield 2-hydroxydec-4-enoic acid due to increased electrophilicity of the carbonyl. 2-hydroxydec-4-enoic acid can then be further oxidized by poxM to yield the alpha-ketoacid 2-oxodec-4-enoicacid, which is reductively aminated by the aminotransferase poxL to yield (S,E)-2-aminodec-4-enoic acid. The Hybrid PKS-NRPS synthetase poxE then performs condensation between the octaketide product of its PKS modules and the amino group of (S,E)-2-aminodec-4-enoic acid which is activated and incorporated by the adenylation domain. The resulting aminoacyl product can be cyclized by the Diels-Alderase PoxQ and reductively released by the reductive (R) domain of poxE to yield an aldehyde intermediate. The released aldehyde is then substrate for a Knoevenagel condensation by the hydrolyase poxO followed by an oxidation at the 5-position of the pyrrolidone ring. The presence of the olefin from the amino acid building block allows for migration of the substituted allyl group to occur. This allylic transposition reaction takes place in a conjugate addition, semipinacol-like fashion to yield a succinimide intermediate. Iterative two-electron oxidations of the C7 methyl of the succinimide intermediate to the carboxylic acid can be catalyzed by one of two remaining cytochrome P450 monooxygenasess poxC or poxD to yield oxaleimide A. Subsequent oxidation yields the maleimide scaffold oxaleimide I. Both oxaleimide A and oxaleimide I can undergo oxidative modifications in the decalin ring to yield the series of products oxaleimides B to H. In Penicillium oxalicum (strain 114-2 / CGMCC 5302) (Penicillium decumbens), this protein is Aminotransferase poxL.